Consider the following 527-residue polypeptide: Outer capsid protein VP5 (527 aa).

The interval 1–42 (MGKFIKQLSKFGKKVGGALTSNTAKKIYKTIGDTAVRFAESD) is involved in membrane permeabilization.

Belongs to the orbivirus VP5 family.

The protein resides in the virion. VP5 protein is one of the two proteins (with VP2) which constitute the virus particle outer capsid. Acts as a membrane permeabilization protein that mediates release of viral particles from endosomal compartments into the cytoplasm. Permeabilization activity is probably negatively regulated by VP2 and is triggered by endosomal degradation of VP2 and exposure to low pH. The sequence is that of Outer capsid protein VP5 (Segment-6) from Antilocapra americana (Pronghorn).